Here is a 490-residue protein sequence, read N- to C-terminus: Dipeptide and tripeptide permease A (490 aa).

Over 1 to 34 (MSNANNNQPENVSLNAFKQPRAFYLIFSIELWER) the chain is Cytoplasmic. A helical membrane pass occupies residues 35 to 55 (FGYYGLQGIMAVYLVKMLGMT). Topologically, residues 56–59 (EADS) are periplasmic. Residues 60 to 80 (ITLFSSFSALVYGFVAIGGWL) form a helical membrane-spanning segment. The Cytoplasmic segment spans residues 81-89 (GDKVLGAKR). Residues 90-110 (VIMLGALVLAIGYAFVAYSGH) traverse the membrane as a helical segment. Residue Asp111 is a topological domain, periplasmic. Residues 112-132 (LSLVYVGMATIAVGNGLFKAN) traverse the membrane as a helical segment. The Cytoplasmic segment spans residues 133-153 (PSSLLSTCYEKNDPRLDGAFT). Residues 154–174 (MYYMSVNIGSFFSMLATPWLA) traverse the membrane as a helical segment. Residues 175–176 (AR) lie on the Periplasmic side of the membrane. The helical transmembrane segment at 177–197 (FGWSVAFSLSVVGMLITLVNF) threads the bilayer. The Cytoplasmic segment spans residues 198–217 (MMCRRWVKDQGSKPDFAPLQ). A helical membrane pass occupies residues 218–238 (VGKLMMTLVGVVILVAISTWL). Residues 239-246 (LHNQTIAR) are Periplasmic-facing. A helical transmembrane segment spans residues 247 to 267 (WALAIISAGIILIFAKETFAL). Over 268 to 274 (QGGARRK) the chain is Cytoplasmic. A helical transmembrane segment spans residues 275-295 (MIVAFLLMLEAVVFFVLYSQM). The Periplasmic portion of the chain corresponds to 296 to 320 (PTSLNFFAIHNVEHSIFGIAFEPEQ). The helical transmembrane segment at 321 to 341 (YQALNPFWIMVASPILAAIYN) threads the bilayer. Residues 342–352 (KMGDRLPMPHK) lie on the Cytoplasmic side of the membrane. Residues 353-373 (FAIGMVLCSGAFLVLPWGASF) form a helical membrane-spanning segment. Topologically, residues 374-383 (ANEAGIVSVN) are periplasmic. A helical membrane pass occupies residues 384–404 (WLILSYALQSIGELMISGLGL). The Cytoplasmic portion of the chain corresponds to 405–414 (AMVAQLVPQR). Residues 415-435 (LMGFIMGSWFLTTAAAALIAG) traverse the membrane as a helical segment. Residues 436–460 (KVAALTAVPGGEVADPHASLAIYSH) are Periplasmic-facing. The chain crosses the membrane as a helical span at residues 461–481 (VFMQIGLATAVIAVLMLLTAP). Residues 482–490 (KLNRMTLGD) lie on the Cytoplasmic side of the membrane.

The protein belongs to the major facilitator superfamily. Proton-dependent oligopeptide transporter (POT/PTR) (TC 2.A.17) family. DtpA subfamily.

It is found in the cell inner membrane. Its function is as follows. Proton-dependent permease that transports di- and tripeptides. The sequence is that of Dipeptide and tripeptide permease A from Edwardsiella piscicida.